Consider the following 238-residue polypeptide: MYEVKLASFHGPLDLLLHLIKQYEIDIYDISMKILTEQYINYIKDVTDLDINVHGDYLVMASELLRIKSRMLLPESTETVEETEDPREGLMNQLIEYQNYRMLAEILNEKKKEEEKYFIKRGNDLSRFEKVDTSLELELVDLITAYYKAKQRQHVVKPTISMARDTYSIEDATKNIIENLQQKQSITFADFVTFSETKTQIVTLFMALLELMKTETVKIRQERTFGDIYIERGRRYNG.

This sequence belongs to the ScpA family. Component of a cohesin-like complex composed of ScpA, ScpB and the Smc homodimer, in which ScpA and ScpB bind to the head domain of Smc. The presence of the three proteins is required for the association of the complex with DNA.

The protein resides in the cytoplasm. Functionally, participates in chromosomal partition during cell division. May act via the formation of a condensin-like complex containing Smc and ScpB that pull DNA away from mid-cell into both cell halves. The sequence is that of Segregation and condensation protein A from Macrococcus caseolyticus (strain JCSC5402) (Macrococcoides caseolyticum).